Consider the following 96-residue polypeptide: Co-chaperonin GroES (96 aa).

It belongs to the GroES chaperonin family. In terms of assembly, heptamer of 7 subunits arranged in a ring. Interacts with the chaperonin GroEL.

It localises to the cytoplasm. Together with the chaperonin GroEL, plays an essential role in assisting protein folding. The GroEL-GroES system forms a nano-cage that allows encapsulation of the non-native substrate proteins and provides a physical environment optimized to promote and accelerate protein folding. GroES binds to the apical surface of the GroEL ring, thereby capping the opening of the GroEL channel. The sequence is that of Co-chaperonin GroES from Shewanella halifaxensis (strain HAW-EB4).